The primary structure comprises 756 residues: DNA mismatch repair protein Mlh1 (756 aa).

N-acetylserine is present on Ser2. The residue at position 33 (Lys33) is an N6-acetyllysine. Residues Asn38, Asp63, 82–84 (TSK), and 100–104 (RGEAL) each bind ATP. 2 positions are modified to N6-acetyllysine: Lys241 and Lys361. Disordered stretches follow at residues 355-378 (PSGE…SDKV) and 400-491 (LSKP…KEMT). Positions 362 to 375 (STTSLTSSSTSGSS) are enriched in low complexity. Residue Lys377 is modified to N6-acetyllysine. The segment at 410-650 (AIVTEDKTDI…LLIDNYVPPL (241 aa)) is interaction with EXO1. Polar residues predominate over residues 443 to 457 (KNQSLEGDTTKGTSE). A Nuclear localization signal motif is present at residues 471–474 (KRHR). Position 477 is a phosphoserine (Ser477).

The protein belongs to the DNA mismatch repair MutL/HexB family. In terms of assembly, component of the DNA mismatch repair (MMR) complex composed at least of MSH2, MSH3, MSH6, PMS1 and MLH1. Heterodimer of MLH1 and PMS2 (MutL alpha), MLH1 and PMS1 (MutL beta) or MLH1 and MLH3 (MutL gamma). Forms a ternary complex with MutS alpha (MSH2-MSH6) or MutS beta (MSH2-MSH3). Part of the BRCA1-associated genome surveillance complex (BASC), which contains BRCA1, MSH2, MSH6, MLH1, ATM, BLM, PMS2 and the RAD50-MRE11-NBS1 protein complex. This association could be a dynamic process changing throughout the cell cycle and within subnuclear domains. Interacts with MCM9; the interaction recruits MLH1 to chromatin. Interacts with MCM8. Interacts with PMS2; this interaction promotes MLH1 stability. Interacts with MBD4. Interacts with EXO1. Interacts with MTMR15/FAN1. In terms of processing, acetylated. Deacetylated by HDAC6 which prevents the MutL alpha complex, formed by the MLH1-PMS2 heterodimer, from being recruited to the MutS alpha complex, formed by the MSH2-MSH6 heterodimer, leading to tolerance of DNA damage. Ubiquitinated by UBR4; leading to proteasomal degradation. This ubiquitination is counteracted by the deubiquitinase USP5. Colon, lymphocytes, breast, lung, spleen, testis, prostate, thyroid, gall bladder and heart.

The protein localises to the nucleus. It localises to the chromosome. In terms of biological role, heterodimerizes with PMS2 to form MutL alpha, a component of the post-replicative DNA mismatch repair system (MMR). DNA repair is initiated by MutS alpha (MSH2-MSH6) or MutS beta (MSH2-MSH3) binding to a dsDNA mismatch, then MutL alpha is recruited to the heteroduplex. Assembly of the MutL-MutS-heteroduplex ternary complex in presence of RFC and PCNA is sufficient to activate endonuclease activity of PMS2. It introduces single-strand breaks near the mismatch and thus generates new entry points for the exonuclease EXO1 to degrade the strand containing the mismatch. DNA methylation would prevent cleavage and therefore assure that only the newly mutated DNA strand is going to be corrected. MutL alpha (MLH1-PMS2) interacts physically with the clamp loader subunits of DNA polymerase III, suggesting that it may play a role to recruit the DNA polymerase III to the site of the MMR. Also implicated in DNA damage signaling, a process which induces cell cycle arrest and can lead to apoptosis in case of major DNA damages. Heterodimerizes with MLH3 to form MutL gamma which plays a role in meiosis. The protein is DNA mismatch repair protein Mlh1 (MLH1) of Homo sapiens (Human).